A 374-amino-acid polypeptide reads, in one-letter code: Queuine tRNA-ribosyltransferase (374 aa).

Asp-92 acts as the Proton acceptor in catalysis. Substrate-binding positions include 92–96 (DSGGY), Asp-146, Gln-193, and Gly-220. The RNA binding stretch occupies residues 251-257 (GVGKPDD). The active-site Nucleophile is the Asp-270. The RNA binding; important for wobble base 34 recognition stretch occupies residues 275–279 (TRSGR). Cys-308, Cys-310, Cys-313, and His-339 together coordinate Zn(2+).

This sequence belongs to the queuine tRNA-ribosyltransferase family. In terms of assembly, homodimer. Within each dimer, one monomer is responsible for RNA recognition and catalysis, while the other monomer binds to the replacement base PreQ1. It depends on Zn(2+) as a cofactor.

The catalysed reaction is 7-aminomethyl-7-carbaguanine + guanosine(34) in tRNA = 7-aminomethyl-7-carbaguanosine(34) in tRNA + guanine. It participates in tRNA modification; tRNA-queuosine biosynthesis. Catalyzes the base-exchange of a guanine (G) residue with the queuine precursor 7-aminomethyl-7-deazaguanine (PreQ1) at position 34 (anticodon wobble position) in tRNAs with GU(N) anticodons (tRNA-Asp, -Asn, -His and -Tyr). Catalysis occurs through a double-displacement mechanism. The nucleophile active site attacks the C1' of nucleotide 34 to detach the guanine base from the RNA, forming a covalent enzyme-RNA intermediate. The proton acceptor active site deprotonates the incoming PreQ1, allowing a nucleophilic attack on the C1' of the ribose to form the product. After dissociation, two additional enzymatic reactions on the tRNA convert PreQ1 to queuine (Q), resulting in the hypermodified nucleoside queuosine (7-(((4,5-cis-dihydroxy-2-cyclopenten-1-yl)amino)methyl)-7-deazaguanosine). This is Queuine tRNA-ribosyltransferase from Novosphingobium aromaticivorans (strain ATCC 700278 / DSM 12444 / CCUG 56034 / CIP 105152 / NBRC 16084 / F199).